The primary structure comprises 142 residues: Large ribosomal subunit protein uL13 (142 aa).

The protein belongs to the universal ribosomal protein uL13 family. Part of the 50S ribosomal subunit.

Its function is as follows. This protein is one of the early assembly proteins of the 50S ribosomal subunit, although it is not seen to bind rRNA by itself. It is important during the early stages of 50S assembly. This is Large ribosomal subunit protein uL13 from Pseudomonas paraeruginosa (strain DSM 24068 / PA7) (Pseudomonas aeruginosa (strain PA7)).